We begin with the raw amino-acid sequence, 231 residues long: Biosynthetic peptidoglycan transglycosylase (231 aa).

A helical transmembrane segment spans residues 7-27 (LLFWLIVVPVLLVLLLQLYFF).

This sequence belongs to the glycosyltransferase 51 family.

The protein localises to the cell inner membrane. It carries out the reaction [GlcNAc-(1-&gt;4)-Mur2Ac(oyl-L-Ala-gamma-D-Glu-L-Lys-D-Ala-D-Ala)](n)-di-trans,octa-cis-undecaprenyl diphosphate + beta-D-GlcNAc-(1-&gt;4)-Mur2Ac(oyl-L-Ala-gamma-D-Glu-L-Lys-D-Ala-D-Ala)-di-trans,octa-cis-undecaprenyl diphosphate = [GlcNAc-(1-&gt;4)-Mur2Ac(oyl-L-Ala-gamma-D-Glu-L-Lys-D-Ala-D-Ala)](n+1)-di-trans,octa-cis-undecaprenyl diphosphate + di-trans,octa-cis-undecaprenyl diphosphate + H(+). The protein operates within cell wall biogenesis; peptidoglycan biosynthesis. In terms of biological role, peptidoglycan polymerase that catalyzes glycan chain elongation from lipid-linked precursors. This Janthinobacterium sp. (strain Marseille) (Minibacterium massiliensis) protein is Biosynthetic peptidoglycan transglycosylase.